Reading from the N-terminus, the 113-residue chain is Inner membrane protein YiaB (113 aa).

The Cytoplasmic segment spans residues 1–9 (MKTSKTVAK). Residues 10–20 (LLFVVGALVYL) traverse the membrane as a helical segment. The Periplasmic portion of the chain corresponds to 21-33 (VGLWISCPLLSGK). A helical transmembrane segment spans residues 34-51 (GYFLGVLMTATFGNYAYL). The Cytoplasmic segment spans residues 52 to 61 (RAEKLGQLDD). Residues 62–82 (FFTHICQLVALITIGLLFIGV) form a helical membrane-spanning segment. Topologically, residues 83–84 (LN) are periplasmic. The helical transmembrane segment at 85 to 105 (APINTYEMVIYPIAFFVCLFG) threads the bilayer. Residues 106–113 (QMRLFRSA) are Cytoplasmic-facing.

The protein resides in the cell inner membrane. The sequence is that of Inner membrane protein YiaB (yiaB) from Escherichia coli (strain K12).